The chain runs to 274 residues: ATP synthase subunit a (274 aa).

Transmembrane regions (helical) follow at residues 44 to 64 (VDSM…FYMV), 110 to 130 (FIWV…FPFI), 142 to 164 (IVPS…LILF), 212 to 232 (LFGN…LLPW), and 243 to 263 (AIFH…LTIV).

It belongs to the ATPase A chain family. F-type ATPases have 2 components, CF(1) - the catalytic core - and CF(0) - the membrane proton channel. CF(1) has five subunits: alpha(3), beta(3), gamma(1), delta(1), epsilon(1). CF(0) has three main subunits: a(1), b(2) and c(9-12). The alpha and beta chains form an alternating ring which encloses part of the gamma chain. CF(1) is attached to CF(0) by a central stalk formed by the gamma and epsilon chains, while a peripheral stalk is formed by the delta and b chains.

It is found in the cell membrane. Its function is as follows. Key component of the proton channel; it plays a direct role in the translocation of protons across the membrane. In Buchnera aphidicola subsp. Acyrthosiphon pisum (strain APS) (Acyrthosiphon pisum symbiotic bacterium), this protein is ATP synthase subunit a.